A 155-amino-acid chain; its full sequence is MPKYVEGKLNAEGLRFGIVVGRFNSFIGERLLEGALDALLRHGANDAQITVVRVPGAFEIPLTAQKMAGSGNYDALICLGAVIRGSTPHFDYVSSEVSKGIAHVSLATGVPVAFGVLTTDTIEQAIERAGTKAGNKGFDAAMTVIEIANVFKEMK.

5-amino-6-(D-ribitylamino)uracil is bound by residues Phe23, 57 to 59, and 81 to 83; these read AFE and AVI. Residue 86–87 participates in (2S)-2-hydroxy-3-oxobutyl phosphate binding; the sequence is ST. The Proton donor role is filled by His89. Residue Phe114 coordinates 5-amino-6-(D-ribitylamino)uracil. A (2S)-2-hydroxy-3-oxobutyl phosphate-binding site is contributed by Arg128.

It belongs to the DMRL synthase family.

It carries out the reaction (2S)-2-hydroxy-3-oxobutyl phosphate + 5-amino-6-(D-ribitylamino)uracil = 6,7-dimethyl-8-(1-D-ribityl)lumazine + phosphate + 2 H2O + H(+). The protein operates within cofactor biosynthesis; riboflavin biosynthesis; riboflavin from 2-hydroxy-3-oxobutyl phosphate and 5-amino-6-(D-ribitylamino)uracil: step 1/2. In terms of biological role, catalyzes the formation of 6,7-dimethyl-8-ribityllumazine by condensation of 5-amino-6-(D-ribitylamino)uracil with 3,4-dihydroxy-2-butanone 4-phosphate. This is the penultimate step in the biosynthesis of riboflavin. This is 6,7-dimethyl-8-ribityllumazine synthase from Citrifermentans bemidjiense (strain ATCC BAA-1014 / DSM 16622 / JCM 12645 / Bem) (Geobacter bemidjiensis).